We begin with the raw amino-acid sequence, 118 residues long: NADH-quinone oxidoreductase subunit A 2 (118 aa).

Transmembrane regions (helical) follow at residues 5–25, 62–82, and 87–107; these read YLPIIVLVVVAVLFGCGSLIF, IIAMLFILFDIEAVFLYPWAV, and LGMFGLMEMGVFIVILFVGYI.

Belongs to the complex I subunit 3 family. NDH-1 is composed of 14 different subunits. Subunits NuoA, H, J, K, L, M, N constitute the membrane sector of the complex.

It localises to the cell inner membrane. It catalyses the reaction a quinone + NADH + 5 H(+)(in) = a quinol + NAD(+) + 4 H(+)(out). Its function is as follows. NDH-1 shuttles electrons from NADH, via FMN and iron-sulfur (Fe-S) centers, to quinones in the respiratory chain. The immediate electron acceptor for the enzyme in this species is believed to be ubiquinone. Couples the redox reaction to proton translocation (for every two electrons transferred, four hydrogen ions are translocated across the cytoplasmic membrane), and thus conserves the redox energy in a proton gradient. This is NADH-quinone oxidoreductase subunit A 2 from Geotalea uraniireducens (strain Rf4) (Geobacter uraniireducens).